The primary structure comprises 368 residues: 1-deoxy-D-xylulose 5-phosphate reductoisomerase (368 aa).

NADPH is bound by residues Thr7, Gly8, Ser9, Ile10, Gly31, Lys32, Asn33, and Asn113. Residue Lys114 participates in 1-deoxy-D-xylulose 5-phosphate binding. Glu115 contributes to the NADPH binding site. Residue Asp133 coordinates Mn(2+). Ser134, Glu135, Ser158, and His181 together coordinate 1-deoxy-D-xylulose 5-phosphate. Glu135 lines the Mn(2+) pocket. NADPH is bound at residue Gly187. 1-deoxy-D-xylulose 5-phosphate is bound by residues Ser194, Asn199, Lys200, and Glu203. Mn(2+) is bound at residue Glu203.

This sequence belongs to the DXR family. Mg(2+) serves as cofactor. The cofactor is Mn(2+).

The enzyme catalyses 2-C-methyl-D-erythritol 4-phosphate + NADP(+) = 1-deoxy-D-xylulose 5-phosphate + NADPH + H(+). Its pathway is isoprenoid biosynthesis; isopentenyl diphosphate biosynthesis via DXP pathway; isopentenyl diphosphate from 1-deoxy-D-xylulose 5-phosphate: step 1/6. Its function is as follows. Catalyzes the NADPH-dependent rearrangement and reduction of 1-deoxy-D-xylulose-5-phosphate (DXP) to 2-C-methyl-D-erythritol 4-phosphate (MEP). The sequence is that of 1-deoxy-D-xylulose 5-phosphate reductoisomerase from Helicobacter pylori (strain ATCC 700392 / 26695) (Campylobacter pylori).